Consider the following 344-residue polypeptide: tRNA(Ile)-lysidine synthase (344 aa).

Residue 35 to 40 (SGGPDS) coordinates ATP.

This sequence belongs to the tRNA(Ile)-lysidine synthase family.

It localises to the cytoplasm. It catalyses the reaction cytidine(34) in tRNA(Ile2) + L-lysine + ATP = lysidine(34) in tRNA(Ile2) + AMP + diphosphate + H(+). Functionally, ligates lysine onto the cytidine present at position 34 of the AUA codon-specific tRNA(Ile) that contains the anticodon CAU, in an ATP-dependent manner. Cytidine is converted to lysidine, thus changing the amino acid specificity of the tRNA from methionine to isoleucine. The protein is tRNA(Ile)-lysidine synthase of Methylobacterium sp. (strain 4-46).